Reading from the N-terminus, the 315-residue chain is Olfactory receptor 52R1 (315 aa).

At 1–28 (MVLASGNSSSHPVSFILLGIPGLESFQL) the chain is on the extracellular side. Asparagine 7 is a glycosylation site (N-linked (GlcNAc...) asparagine). A helical transmembrane segment spans residues 29–49 (WIAFPFCATYAVAVVGNITLL). The Cytoplasmic segment spans residues 50–57 (HVIRIDHT). Residues 58 to 78 (LHEPMYLFLAMLAITDLVLSS) traverse the membrane as a helical segment. Residues 79–102 (STQPKMLAIFWFHAHEIQYHACLI) lie on the Extracellular side of the membrane. Cysteine 100 and cysteine 192 are disulfide-bonded. Residues 103–123 (QVFFIHAFSSVESGVLMAMAL) traverse the membrane as a helical segment. The Cytoplasmic portion of the chain corresponds to 124–142 (DCYVAICFPLRHSSILTPS). The helical transmembrane segment at 143-163 (VVIKLGTIVMLRGLLWVSPFC) threads the bilayer. Topologically, residues 164-199 (FMVSRMPFCQHQAIPQSYCEHMAVLKLVCADTSISR) are extracellular. The helical transmembrane segment at 200–220 (GNGLFVAFSVAGFDMIVIGMS) threads the bilayer. The Cytoplasmic segment spans residues 221 to 240 (YVMILRAVLQLPSGEARLKA). Residues 241–261 (FSTRSSHICVILALYIPALFS) form a helical membrane-spanning segment. Residues 262–276 (FLTYRFGHDVPRVVH) are Extracellular-facing. Residues 277–297 (ILFANLYLLIPPMLNPIIYGV) form a helical membrane-spanning segment. Over 298–315 (RTKQIGDRVIQGCCGNIP) the chain is Cytoplasmic.

The protein belongs to the G-protein coupled receptor 1 family.

The protein localises to the cell membrane. Odorant receptor. The polypeptide is Olfactory receptor 52R1 (OR52R1) (Homo sapiens (Human)).